The sequence spans 89 residues: Small ribosomal subunit protein uS15 (89 aa).

This sequence belongs to the universal ribosomal protein uS15 family. Part of the 30S ribosomal subunit. Forms a bridge to the 50S subunit in the 70S ribosome, contacting the 23S rRNA.

In terms of biological role, one of the primary rRNA binding proteins, it binds directly to 16S rRNA where it helps nucleate assembly of the platform of the 30S subunit by binding and bridging several RNA helices of the 16S rRNA. Its function is as follows. Forms an intersubunit bridge (bridge B4) with the 23S rRNA of the 50S subunit in the ribosome. This Mycolicibacterium smegmatis (strain ATCC 700084 / mc(2)155) (Mycobacterium smegmatis) protein is Small ribosomal subunit protein uS15.